Consider the following 124-residue polypeptide: Large ribosomal subunit protein uL18 (124 aa).

It belongs to the universal ribosomal protein uL18 family. In terms of assembly, part of the 50S ribosomal subunit; part of the 5S rRNA/L5/L18/L25 subcomplex. Contacts the 5S and 23S rRNAs.

This is one of the proteins that bind and probably mediate the attachment of the 5S RNA into the large ribosomal subunit, where it forms part of the central protuberance. This chain is Large ribosomal subunit protein uL18, found in Koribacter versatilis (strain Ellin345).